A 251-amino-acid chain; its full sequence is MTTRRIIACLDVKDGKVVKGVRFLDLKLKGDPAELASRYEEEGADEIVFLDISATVEGRKTLLEKVRETASVLSIPLTVGGGVRTVEDVSNLLSNGADKVSLNTVAAENPSVVSMASREFGAQAVVVAIDAKRVGNGWRVFVRSGTKDTGLDAVDWAKRVEEMGAGEILLTSIDRDGTRDGYDLELTKAVVRATKVPVIASGGAGKPDHFLSVFRQAGADAALAAGIFHDGVIRIRELKDYLKDAGIEVRT.

Active-site residues include aspartate 11 and aspartate 130.

This sequence belongs to the HisA/HisF family. In terms of assembly, heterodimer of HisH and HisF.

The protein localises to the cytoplasm. It carries out the reaction 5-[(5-phospho-1-deoxy-D-ribulos-1-ylimino)methylamino]-1-(5-phospho-beta-D-ribosyl)imidazole-4-carboxamide + L-glutamine = D-erythro-1-(imidazol-4-yl)glycerol 3-phosphate + 5-amino-1-(5-phospho-beta-D-ribosyl)imidazole-4-carboxamide + L-glutamate + H(+). The protein operates within amino-acid biosynthesis; L-histidine biosynthesis; L-histidine from 5-phospho-alpha-D-ribose 1-diphosphate: step 5/9. IGPS catalyzes the conversion of PRFAR and glutamine to IGP, AICAR and glutamate. The HisF subunit catalyzes the cyclization activity that produces IGP and AICAR from PRFAR using the ammonia provided by the HisH subunit. This is Imidazole glycerol phosphate synthase subunit HisF from Metallosphaera sedula (strain ATCC 51363 / DSM 5348 / JCM 9185 / NBRC 15509 / TH2).